We begin with the raw amino-acid sequence, 459 residues long: Cysteine--tRNA ligase (459 aa).

Cysteine 28 is a Zn(2+) binding site. The short motif at 30-40 is the 'HIGH' region element; that stretch reads VTIYDLCHIGH. 3 residues coordinate Zn(2+): cysteine 209, histidine 234, and glutamate 238. The 'KMSKS' region signature appears at 266–270; it reads KMSKS. Lysine 269 contributes to the ATP binding site.

Belongs to the class-I aminoacyl-tRNA synthetase family. As to quaternary structure, monomer. Requires Zn(2+) as cofactor.

The protein localises to the cytoplasm. It carries out the reaction tRNA(Cys) + L-cysteine + ATP = L-cysteinyl-tRNA(Cys) + AMP + diphosphate. This Shewanella baltica (strain OS185) protein is Cysteine--tRNA ligase.